The following is a 457-amino-acid chain: Argininosuccinate lyase (457 aa).

The protein belongs to the lyase 1 family. Argininosuccinate lyase subfamily.

The protein localises to the cytoplasm. The enzyme catalyses 2-(N(omega)-L-arginino)succinate = fumarate + L-arginine. It functions in the pathway amino-acid biosynthesis; L-arginine biosynthesis; L-arginine from L-ornithine and carbamoyl phosphate: step 3/3. The sequence is that of Argininosuccinate lyase from Haemophilus influenzae (strain 86-028NP).